Consider the following 159-residue polypeptide: Testis-specific XK-related protein, Y-linked (159 aa).

The next 3 membrane-spanning stretches (helical) occupy residues 1-21 (MFIFNSIADDIFPLISCVGAI), 45-65 (IYLMIWHSLVIISPVVTLAFF), and 72-92 (GSLHFLLIIYFVLLLTPWLEF).

The protein belongs to the XK family. In terms of tissue distribution, testis specific.

It localises to the membrane. The sequence is that of Testis-specific XK-related protein, Y-linked (XKRY) from Homo sapiens (Human).